A 117-amino-acid chain; its full sequence is Aspartate 1-decarboxylase (117 aa).

The active-site Schiff-base intermediate with substrate; via pyruvic acid is Ser25. Position 25 is a pyruvic acid (Ser) (Ser25). Residue Thr57 coordinates substrate. Residue Tyr58 is the Proton donor of the active site. Substrate is bound at residue Gly73 to Ala75.

Belongs to the PanD family. Heterooctamer of four alpha and four beta subunits. The cofactor is pyruvate. Is synthesized initially as an inactive proenzyme, which is activated by self-cleavage at a specific serine bond to produce a beta-subunit with a hydroxyl group at its C-terminus and an alpha-subunit with a pyruvoyl group at its N-terminus.

It localises to the cytoplasm. The enzyme catalyses L-aspartate + H(+) = beta-alanine + CO2. It participates in cofactor biosynthesis; (R)-pantothenate biosynthesis; beta-alanine from L-aspartate: step 1/1. Catalyzes the pyruvoyl-dependent decarboxylation of aspartate to produce beta-alanine. This Thermoanaerobacter pseudethanolicus (strain ATCC 33223 / 39E) (Clostridium thermohydrosulfuricum) protein is Aspartate 1-decarboxylase.